The chain runs to 705 residues: Protein artemis (705 aa).

Thr380 bears the Phosphothreonine mark. The residue at position 385 (Ser385) is a Phosphoserine. Positions Glu451–Glu462 are enriched in acidic residues. Disordered regions lie at residues Glu451 to Pro484, Pro535 to Ser569, and Thr638 to Pro675. The span at Thr546–Ile559 shows a compositional bias: low complexity. Over residues Thr560–Ser569 the composition is skewed to polar residues. The span at Ser652–Ser662 shows a compositional bias: low complexity. Residue Ser658 is modified to Phosphoserine; by ATM.

Belongs to the DNA repair metallo-beta-lactamase (DRMBL) family. In terms of assembly, interacts with LIG4; the interaction is direct. Interacts with ATM. Interacts with BRCA1. Interacts with PRKDC. Interacts with TP53BP1. Also exhibits ATM- and phosphorylation-dependent interaction with the MRN complex, composed of MRE11, RAD50, and NBN. Post-translationally, phosphorylation on undefined residues by PRKDC may stimulate endonucleolytic activity on 5' and 3' hairpins and overhangs. PRKDC must remain present, even after phosphorylation, for efficient hairpin opening. Also phosphorylated by ATM in response to ionizing radiation (IR) and by ATR in response to ultraviolet (UV) radiation.

The protein localises to the nucleus. Its function is as follows. Required for V(D)J recombination, the process by which exons encoding the antigen-binding domains of immunoglobulins and T-cell receptor proteins are assembled from individual V, (D), and J gene segments. V(D)J recombination is initiated by the lymphoid specific RAG endonuclease complex, which generates site specific DNA double strand breaks (DSBs). These DSBs present two types of DNA end structures: hairpin sealed coding ends and phosphorylated blunt signal ends. These ends are independently repaired by the non homologous end joining (NHEJ) pathway to form coding and signal joints respectively. This protein likely exhibits single-strand specific 5'-3' exonuclease activity in isolation, and may acquire endonucleolytic activity on 5' and 3' hairpins and overhangs when in a complex with PRKDC. The latter activity may be required specifically for the resolution of closed hairpins prior to the formation of the coding joint. May also be required for the repair of complex DSBs induced by ionizing radiation, which require substantial end-processing prior to religation by NHEJ. This is Protein artemis (Dclre1c) from Mus musculus (Mouse).